Reading from the N-terminus, the 810-residue chain is Sister chromatid cohesion 1 protein 2 (810 aa).

3 disordered regions span residues 200–244 (RDTT…LLEP), 273–315 (SHES…SECG), and 606–626 (MGASSTTSGTAHQTENAAETP). 2 stretches are compositionally biased toward basic and acidic residues: residues 220-234 (EPSRDHQNASRHRED) and 273-310 (SHESSGDNLHRDGHTENLESEKTSKKTSCEEMQHDRSL). The span at 606-622 (MGASSTTSGTAHQTENA) shows a compositional bias: polar residues.

Belongs to the rad21 family. In terms of assembly, component of the cohesin complex. Low expression in shoots, buds, siliques, leaves and roots. Found in, but not limited to, actively dividing cells: in procambium, protoderm and ground meristem in roots, and in shoot and floral meristems.

The protein localises to the nucleus. In terms of biological role, may be involved in sister chromatid cohesion during mitosis. In Arabidopsis thaliana (Mouse-ear cress), this protein is Sister chromatid cohesion 1 protein 2 (SYN2).